Consider the following 39-residue polypeptide: Potassium channel toxin alpha-KTx 2.1 (39 aa).

Cystine bridges form between cysteine 7–cysteine 29, cysteine 13–cysteine 34, and cysteine 17–cysteine 36. An interaction with Ca(2+)-activated K(+) channels region spans residues 26–34; that stretch reads GAKCMNGKC. Position 39 is an asparagine amide (asparagine 39).

Belongs to the short scorpion toxin superfamily. Potassium channel inhibitor family. Alpha-KTx 02 subfamily. As to expression, expressed by the venom gland.

The protein localises to the secreted. Functionally, blocks voltage-gated potassium channels (mKv1.1/KCNA1 (Kd&gt;25 nM), rKv1.2/KCNA2 (Kd=2 nM), mKv1.3/KCNA3 (Kd=1 nM), hKv1.5/KCNA5 (Kd&gt;25 nM) and mKv3.1/KCNC1 (Kd&gt;25 nM)) and calcium-activated potassium channels (KCa1.1/KCNMA1 and KCa3.1/KCNN4, Kd&gt;25 nM). The chain is Potassium channel toxin alpha-KTx 2.1 from Centruroides noxius (Mexican scorpion).